Consider the following 170-residue polypeptide: MRVEGQLGDEVVTIKATSIARRLHGKSHYGKMYEDRLQLSLIEAAYLMERGKLKLMKDDDEVSPEEFISLLGERGLYSKYLVYRDLRNRGYIVKTGFKYGAEFRLYERGGAPGRTHSAYLVRVISENDTIHALDFSSYVRVAHGVNKKLLMAFLDDEEDITYYLVDWIRP.

Catalysis depends on residues Tyr106, His116, and Lys147.

This sequence belongs to the tRNA-intron endonuclease family. Archaeal short subfamily. Homotetramer; although the tetramer contains four active sites, only two participate in the cleavage. Therefore, it should be considered as a dimer of dimers.

The enzyme catalyses pretRNA = a 3'-half-tRNA molecule with a 5'-OH end + a 5'-half-tRNA molecule with a 2',3'-cyclic phosphate end + an intron with a 2',3'-cyclic phosphate and a 5'-hydroxyl terminus.. Its function is as follows. Endonuclease that removes tRNA introns. Cleaves pre-tRNA at the 5'- and 3'-splice sites to release the intron. The products are an intron and two tRNA half-molecules bearing 2',3' cyclic phosphate and 5'-OH termini. Recognizes a pseudosymmetric substrate in which 2 bulged loops of 3 bases are separated by a stem of 4 bp. The sequence is that of tRNA-splicing endonuclease from Methanothermobacter thermautotrophicus (strain ATCC 29096 / DSM 1053 / JCM 10044 / NBRC 100330 / Delta H) (Methanobacterium thermoautotrophicum).